Consider the following 255-residue polypeptide: 1-(5-phosphoribosyl)-5-[(5-phosphoribosylamino)methylideneamino] imidazole-4-carboxamide isomerase (255 aa).

Residue Asp-8 is the Proton acceptor of the active site. Catalysis depends on Asp-129, which acts as the Proton donor.

It belongs to the HisA/HisF family.

The protein resides in the cytoplasm. It catalyses the reaction 1-(5-phospho-beta-D-ribosyl)-5-[(5-phospho-beta-D-ribosylamino)methylideneamino]imidazole-4-carboxamide = 5-[(5-phospho-1-deoxy-D-ribulos-1-ylimino)methylamino]-1-(5-phospho-beta-D-ribosyl)imidazole-4-carboxamide. It functions in the pathway amino-acid biosynthesis; L-histidine biosynthesis; L-histidine from 5-phospho-alpha-D-ribose 1-diphosphate: step 4/9. The sequence is that of 1-(5-phosphoribosyl)-5-[(5-phosphoribosylamino)methylideneamino] imidazole-4-carboxamide isomerase from Prochlorococcus marinus subsp. pastoris (strain CCMP1986 / NIES-2087 / MED4).